Here is a 255-residue protein sequence, read N- to C-terminus: Segregation and condensation protein A (255 aa).

The protein belongs to the ScpA family. In terms of assembly, component of a cohesin-like complex composed of ScpA, ScpB and the Smc homodimer, in which ScpA and ScpB bind to the head domain of Smc. The presence of the three proteins is required for the association of the complex with DNA.

The protein resides in the cytoplasm. In terms of biological role, participates in chromosomal partition during cell division. May act via the formation of a condensin-like complex containing Smc and ScpB that pull DNA away from mid-cell into both cell halves. This chain is Segregation and condensation protein A, found in Lactiplantibacillus plantarum (strain ATCC BAA-793 / NCIMB 8826 / WCFS1) (Lactobacillus plantarum).